Reading from the N-terminus, the 302-residue chain is uncharacterized protein (302 aa).

Asparagine 32, asparagine 39, and asparagine 94 each carry an N-linked (GlcNAc...) asparagine glycan. The ShKT domain maps to 80-115 (CRDTDMNCAVWVATNTSDCENVELVNSHCPRTCQTC). Cystine bridges form between cysteine 80–cysteine 115, cysteine 87–cysteine 108, and cysteine 98–cysteine 112. Asparagine 181 is a glycosylation site (N-linked (GlcNAc...) asparagine).

This is an uncharacterized protein from Caenorhabditis elegans.